We begin with the raw amino-acid sequence, 575 residues long: Serine/threonine-protein phosphatase 2A regulatory subunit B'' subunit beta (575 aa).

Residues alanine 41–proline 131 are disordered. An EF-hand domain is found at lysine 388–arginine 423. Aspartate 401, aspartate 403, aspartate 405, and glutamate 412 together coordinate Ca(2+).

In terms of assembly, PP2A consists of a common heterodimeric core enzyme, composed of a 36 kDa catalytic subunit (subunit C) and a 65 kDa constant regulatory subunit (PR65 or subunit A), that associates with a variety of regulatory subunits. Proteins that associate with the core dimer include three families of regulatory subunits B (the R2/B/PR55/B55, R3/B''/PR72/PR130/PR59 and R5/B'/B56 families), the 48 kDa variable regulatory subunit, viral proteins, and cell signaling molecules. Interacts with N-terminal region of CDC6. Interacts with NOD2.

Its subcellular location is the nucleus. The B regulatory subunit might modulate substrate selectivity and catalytic activity, and might also direct the localization of the catalytic enzyme to a particular subcellular compartment. This is Serine/threonine-protein phosphatase 2A regulatory subunit B'' subunit beta (PPP2R3B) from Homo sapiens (Human).